A 312-amino-acid polypeptide reads, in one-letter code: Ribose-phosphate pyrophosphokinase (312 aa).

Residues 34–36 and 93–94 each bind ATP; these read DGE and RQ. Positions 128 and 167 each coordinate Mg(2+). Lys-191 is a catalytic residue. Residues Arg-193 and Asp-217 each contribute to the D-ribose 5-phosphate site.

It belongs to the ribose-phosphate pyrophosphokinase family. Class I subfamily. As to quaternary structure, homohexamer. It depends on Mg(2+) as a cofactor.

It localises to the cytoplasm. It carries out the reaction D-ribose 5-phosphate + ATP = 5-phospho-alpha-D-ribose 1-diphosphate + AMP + H(+). Its pathway is metabolic intermediate biosynthesis; 5-phospho-alpha-D-ribose 1-diphosphate biosynthesis; 5-phospho-alpha-D-ribose 1-diphosphate from D-ribose 5-phosphate (route I): step 1/1. Involved in the biosynthesis of the central metabolite phospho-alpha-D-ribosyl-1-pyrophosphate (PRPP) via the transfer of pyrophosphoryl group from ATP to 1-hydroxyl of ribose-5-phosphate (Rib-5-P). The polypeptide is Ribose-phosphate pyrophosphokinase (Baumannia cicadellinicola subsp. Homalodisca coagulata).